A 125-amino-acid chain; its full sequence is Large ribosomal subunit protein eL8 (125 aa).

The protein belongs to the eukaryotic ribosomal protein eL8 family. As to quaternary structure, part of the 50S ribosomal subunit. Probably part of the RNase P complex.

Its subcellular location is the cytoplasm. Its function is as follows. Multifunctional RNA-binding protein that recognizes the K-turn motif in ribosomal RNA, the RNA component of RNase P, box H/ACA, box C/D and box C'/D' sRNAs. In Nanoarchaeum equitans (strain Kin4-M), this protein is Large ribosomal subunit protein eL8.